The chain runs to 339 residues: MTIKVAINGFGRIGRSILRALYESGRRAEIAVIAVNELADAEGIAHLLKYDSSHGRFAWDVRLNNDVLQVGDDNIRLFHQSDISMLPWQELGIDIVLDCSGIYGSRADGEAHLASGAKKVLFAHPGGNDLDATVVYGVNQHLLTAEDRIVSNASCTTNCIIPIIKLLDDQFEIESGTVTTIHASMNDQPVIDAYHKDLRRTRAASQSIIPVDTKLAAGITRIFPKFCDRFEAISVRVPTINVTAIDLSVTVKSSVTVNKINELMQKSAATSFRGIVDYTELPLVSTDFNHDPHSAIVDGTQTRVSGQHLIKTLVWCDNEWGFANRMLDTTLAMAAMGFK.

12 to 13 lines the NAD(+) pocket; sequence RI. Substrate contacts are provided by residues 154–156, arginine 200, 213–214, and arginine 236; these read SCT and TK. Cysteine 155 (nucleophile) is an active-site residue. Residue asparagine 318 participates in NAD(+) binding.

Belongs to the glyceraldehyde-3-phosphate dehydrogenase family. Epd subfamily. In terms of assembly, homotetramer.

The protein localises to the cytoplasm. The catalysed reaction is D-erythrose 4-phosphate + NAD(+) + H2O = 4-phospho-D-erythronate + NADH + 2 H(+). Its pathway is cofactor biosynthesis; pyridoxine 5'-phosphate biosynthesis; pyridoxine 5'-phosphate from D-erythrose 4-phosphate: step 1/5. Functionally, catalyzes the NAD-dependent conversion of D-erythrose 4-phosphate to 4-phosphoerythronate. This chain is D-erythrose-4-phosphate dehydrogenase, found in Photorhabdus laumondii subsp. laumondii (strain DSM 15139 / CIP 105565 / TT01) (Photorhabdus luminescens subsp. laumondii).